The chain runs to 261 residues: Global transcriptional regulator CodY (261 aa).

Residues 1-159 (MANLLDKTRK…ASTVVGLQLL (159 aa)) form a GAF domain region. Residues 207-226 (ASVIADRIGITRSVIVNALR) constitute a DNA-binding region (H-T-H motif).

This sequence belongs to the CodY family.

The protein localises to the cytoplasm. Its function is as follows. DNA-binding global transcriptional regulator which is involved in the adaptive response to starvation and acts by directly or indirectly controlling the expression of numerous genes in response to nutrient availability. During rapid exponential growth, CodY is highly active and represses genes whose products allow adaptation to nutrient depletion. This chain is Global transcriptional regulator CodY, found in Streptococcus thermophilus (strain CNRZ 1066).